The primary structure comprises 335 residues: Aliphatic sulfonates import ATP-binding protein SsuB (335 aa).

Residues 48-71 form a disordered region; sequence PFASGGAFGRAPRDDDDDRRGAGD. Residues 74–293 form the ABC transporter domain; it reads VRLTRVSKRY…ARASAAFAEL (220 aa). 106–113 contacts ATP; the sequence is GRSGCGKS.

Belongs to the ABC transporter superfamily. Aliphatic sulfonates importer (TC 3.A.1.17.2) family. The complex is composed of two ATP-binding proteins (SsuB), two transmembrane proteins (SsuC) and a solute-binding protein (SsuA).

The protein resides in the cell inner membrane. It catalyses the reaction ATP + H2O + aliphatic sulfonate-[sulfonate-binding protein]Side 1 = ADP + phosphate + aliphatic sulfonateSide 2 + [sulfonate-binding protein]Side 1.. Part of the ABC transporter complex SsuABC involved in aliphatic sulfonates import. Responsible for energy coupling to the transport system. The chain is Aliphatic sulfonates import ATP-binding protein SsuB from Burkholderia thailandensis (strain ATCC 700388 / DSM 13276 / CCUG 48851 / CIP 106301 / E264).